A 287-amino-acid polypeptide reads, in one-letter code: Pantothenate synthetase (287 aa).

37-44 (MGALHEGH) lines the ATP pocket. The active-site Proton donor is His-44. Residue Gln-68 participates in (R)-pantoate binding. Residue Gln-68 participates in beta-alanine binding. Residue 154–157 (GQKD) participates in ATP binding. Gln-160 provides a ligand contact to (R)-pantoate. Residues Val-183 and 191–194 (LSSR) contribute to the ATP site.

This sequence belongs to the pantothenate synthetase family. As to quaternary structure, homodimer.

The protein localises to the cytoplasm. It carries out the reaction (R)-pantoate + beta-alanine + ATP = (R)-pantothenate + AMP + diphosphate + H(+). Its pathway is cofactor biosynthesis; (R)-pantothenate biosynthesis; (R)-pantothenate from (R)-pantoate and beta-alanine: step 1/1. Functionally, catalyzes the condensation of pantoate with beta-alanine in an ATP-dependent reaction via a pantoyl-adenylate intermediate. The protein is Pantothenate synthetase of Leifsonia xyli subsp. xyli (strain CTCB07).